The primary structure comprises 167 residues: Crossover junction endodeoxyribonuclease RuvC (167 aa).

Catalysis depends on residues Asp7, Glu67, and Asp139. Asp7, Glu67, and Asp139 together coordinate Mg(2+).

The protein belongs to the RuvC family. Homodimer which binds Holliday junction (HJ) DNA. The HJ becomes 2-fold symmetrical on binding to RuvC with unstacked arms; it has a different conformation from HJ DNA in complex with RuvA. In the full resolvosome a probable DNA-RuvA(4)-RuvB(12)-RuvC(2) complex forms which resolves the HJ. The cofactor is Mg(2+).

The protein resides in the cytoplasm. It catalyses the reaction Endonucleolytic cleavage at a junction such as a reciprocal single-stranded crossover between two homologous DNA duplexes (Holliday junction).. Its function is as follows. The RuvA-RuvB-RuvC complex processes Holliday junction (HJ) DNA during genetic recombination and DNA repair. Endonuclease that resolves HJ intermediates. Cleaves cruciform DNA by making single-stranded nicks across the HJ at symmetrical positions within the homologous arms, yielding a 5'-phosphate and a 3'-hydroxyl group; requires a central core of homology in the junction. The consensus cleavage sequence is 5'-(A/T)TT(C/G)-3'. Cleavage occurs on the 3'-side of the TT dinucleotide at the point of strand exchange. HJ branch migration catalyzed by RuvA-RuvB allows RuvC to scan DNA until it finds its consensus sequence, where it cleaves and resolves the cruciform DNA. This is Crossover junction endodeoxyribonuclease RuvC from Akkermansia muciniphila (strain ATCC BAA-835 / DSM 22959 / JCM 33894 / BCRC 81048 / CCUG 64013 / CIP 107961 / Muc).